Reading from the N-terminus, the 453-residue chain is GTPase Der (453 aa).

2 consecutive EngA-type G domains span residues 4–169 and 177–352; these read PIVA…PTQG and TKIA…NEYQ. Residues 10–17, 57–61, 120–123, 183–190, 230–234, and 295–298 contribute to the GTP site; these read GRPNVGKS, DTGGL, NKCE, DTAGI, and NKWD. Positions 353-438 constitute a KH-like domain; that stretch reads RRVTTSVINE…PIRLLWRGKK (86 aa).

Belongs to the TRAFAC class TrmE-Era-EngA-EngB-Septin-like GTPase superfamily. EngA (Der) GTPase family. Associates with the 50S ribosomal subunit.

Functionally, GTPase that plays an essential role in the late steps of ribosome biogenesis. This Trichodesmium erythraeum (strain IMS101) protein is GTPase Der.